We begin with the raw amino-acid sequence, 272 residues long: Putative phosphatase HI_0597 (272 aa).

The active-site Nucleophile is the D11. Residue D11 participates in Mg(2+) binding. Residue L12 participates in phosphate binding. Position 13 (D13) interacts with Mg(2+). Residues 45 to 46 and K195 each bind phosphate; that span reads TG. D218 is a Mg(2+) binding site. Residue N221 coordinates phosphate.

The protein belongs to the HAD-like hydrolase superfamily. Cof family. Mg(2+) is required as a cofactor.

This chain is Putative phosphatase HI_0597, found in Haemophilus influenzae (strain ATCC 51907 / DSM 11121 / KW20 / Rd).